The chain runs to 74 residues: Kappa-scoloptoxin(07)-Ssm2f (74 aa).

A signal peptide spans 1–19 (MLVFYAILFVTVFSNTVMG). Residues 20-41 (ATIDKPIPKPIFREAIEEMEVN) constitute a propeptide that is removed on maturation.

Belongs to the scoloptoxin-07 family. In terms of processing, contains 3 disulfide bonds. Expressed by the venom gland.

The protein localises to the secreted. In terms of biological role, inhibits voltage-gated potassium channels. The polypeptide is Kappa-scoloptoxin(07)-Ssm2f (Scolopendra mutilans (Chinese red-headed centipede)).